We begin with the raw amino-acid sequence, 210 residues long: Large ribosomal subunit protein uL16 (210 aa).

This sequence belongs to the universal ribosomal protein uL16 family. In terms of assembly, component of the large ribosomal subunit. Mature ribosomes consist of a small (40S) and a large (60S) subunit. The 40S subunit contains about 33 different proteins and 1 molecule of RNA (18S). The 60S subunit contains about 49 different proteins and 3 molecules of RNA (28S, 5.8S and 5S).

The protein localises to the cytoplasm. Its function is as follows. Component of the large ribosomal subunit. Plays a role in the formation of actively translating ribosomes. In terms of biological role, (Microbial infection) Seems to bind to the leucine zipper of viral and cellular JUN. In Gallus gallus (Chicken), this protein is Large ribosomal subunit protein uL16.